Consider the following 317-residue polypeptide: tRNA N6-adenosine threonylcarbamoyltransferase (317 aa).

2 residues coordinate Fe cation: His110 and His114. Substrate-binding positions include 132-136, Asp165, Gly178, Asp182, and Asn271; that span reads VVSGG. Residue Asp300 participates in Fe cation binding.

It belongs to the KAE1 / TsaD family. The cofactor is Fe(2+).

Its subcellular location is the cytoplasm. The catalysed reaction is L-threonylcarbamoyladenylate + adenosine(37) in tRNA = N(6)-L-threonylcarbamoyladenosine(37) in tRNA + AMP + H(+). Its function is as follows. Required for the formation of a threonylcarbamoyl group on adenosine at position 37 (t(6)A37) in tRNAs that read codons beginning with adenine. Is involved in the transfer of the threonylcarbamoyl moiety of threonylcarbamoyl-AMP (TC-AMP) to the N6 group of A37, together with TsaE and TsaB. TsaD likely plays a direct catalytic role in this reaction. The polypeptide is tRNA N6-adenosine threonylcarbamoyltransferase (Mesoplasma florum (strain ATCC 33453 / NBRC 100688 / NCTC 11704 / L1) (Acholeplasma florum)).